We begin with the raw amino-acid sequence, 1631 residues long: ABC transporter A family member 6 (1631 aa).

7 helical membrane-spanning segments follow: residues 25 to 45 (ICCE…ILAL), 242 to 262 (SVFI…DVVI), 285 to 305 (SWII…VVIF), 317 to 337 (GIVI…SFIF), 346 to 366 (FCGL…IFVS), 372 to 392 (VSVK…SIYI), and 416 to 436 (ILML…FEKV). An ABC transporter 1 domain is found at 491–724 (ISIRNLRKEF…FGQGYLLTCN (234 aa)). 527–534 (GPNGCGKS) contacts ATP. Transmembrane regions (helical) follow at residues 866–886 (SFFL…ILYK), 1047–1067 (AIIY…GSFA), 1099–1119 (WDFF…AGVI), 1127–1147 (FGSF…LGYL), 1158–1178 (AVGA…IASL), 1198–1218 (IIDL…IVFI), and 1242–1262 (LGTP…WILL). The 236-residue stretch at 1309 to 1544 (IQFKNLHKLF…FGAGYSIDVK (236 aa)) folds into the ABC transporter 2 domain. Residue 1347-1354 (GLNGGGKS) participates in ATP binding.

This sequence belongs to the ABC transporter superfamily. ABCA family.

The protein localises to the membrane. In Dictyostelium discoideum (Social amoeba), this protein is ABC transporter A family member 6 (abcA6).